A 367-amino-acid polypeptide reads, in one-letter code: UDP-N-acetylglucosamine--N-acetylmuramyl-(pentapeptide) pyrophosphoryl-undecaprenol N-acetylglucosamine transferase (367 aa).

UDP-N-acetyl-alpha-D-glucosamine is bound by residues threonine 15 to glycine 17, asparagine 127, arginine 163, serine 191, isoleucine 249, and glutamine 294.

The protein belongs to the glycosyltransferase 28 family. MurG subfamily.

Its subcellular location is the cell inner membrane. The enzyme catalyses di-trans,octa-cis-undecaprenyl diphospho-N-acetyl-alpha-D-muramoyl-L-alanyl-D-glutamyl-meso-2,6-diaminopimeloyl-D-alanyl-D-alanine + UDP-N-acetyl-alpha-D-glucosamine = di-trans,octa-cis-undecaprenyl diphospho-[N-acetyl-alpha-D-glucosaminyl-(1-&gt;4)]-N-acetyl-alpha-D-muramoyl-L-alanyl-D-glutamyl-meso-2,6-diaminopimeloyl-D-alanyl-D-alanine + UDP + H(+). It participates in cell wall biogenesis; peptidoglycan biosynthesis. Functionally, cell wall formation. Catalyzes the transfer of a GlcNAc subunit on undecaprenyl-pyrophosphoryl-MurNAc-pentapeptide (lipid intermediate I) to form undecaprenyl-pyrophosphoryl-MurNAc-(pentapeptide)GlcNAc (lipid intermediate II). This Burkholderia mallei (strain NCTC 10247) protein is UDP-N-acetylglucosamine--N-acetylmuramyl-(pentapeptide) pyrophosphoryl-undecaprenol N-acetylglucosamine transferase.